Consider the following 152-residue polypeptide: UPF0178 protein YaiI (152 aa).

Belongs to the UPF0178 family.

The polypeptide is UPF0178 protein YaiI (Escherichia coli O17:K52:H18 (strain UMN026 / ExPEC)).